We begin with the raw amino-acid sequence, 263 residues long: Acyl-[acyl-carrier-protein]--UDP-N-acetylglucosamine O-acyltransferase (263 aa).

It belongs to the transferase hexapeptide repeat family. LpxA subfamily. Homotrimer.

The protein resides in the cytoplasm. The enzyme catalyses a (3R)-hydroxyacyl-[ACP] + UDP-N-acetyl-alpha-D-glucosamine = a UDP-3-O-[(3R)-3-hydroxyacyl]-N-acetyl-alpha-D-glucosamine + holo-[ACP]. Its pathway is glycolipid biosynthesis; lipid IV(A) biosynthesis; lipid IV(A) from (3R)-3-hydroxytetradecanoyl-[acyl-carrier-protein] and UDP-N-acetyl-alpha-D-glucosamine: step 1/6. Functionally, involved in the biosynthesis of lipid A, a phosphorylated glycolipid that anchors the lipopolysaccharide to the outer membrane of the cell. The polypeptide is Acyl-[acyl-carrier-protein]--UDP-N-acetylglucosamine O-acyltransferase (Campylobacter jejuni subsp. doylei (strain ATCC BAA-1458 / RM4099 / 269.97)).